The chain runs to 1240 residues: ATP-dependent helicase/nuclease subunit A (1240 aa).

One can recognise a UvrD-like helicase ATP-binding domain in the interval 12 to 485 (SQWTDDQWKA…IDLAKNFRSR (474 aa)). Position 33-40 (33-40 (AAAGSGKT)) interacts with ATP. Residues 497–804 (KQIMGEEVGE…RIMTIHKSKG (308 aa)) form the UvrD-like helicase C-terminal domain.

This sequence belongs to the helicase family. AddA subfamily. As to quaternary structure, heterodimer of AddA and AddB/RexB. Requires Mg(2+) as cofactor.

It catalyses the reaction Couples ATP hydrolysis with the unwinding of duplex DNA by translocating in the 3'-5' direction.. The catalysed reaction is ATP + H2O = ADP + phosphate + H(+). The heterodimer acts as both an ATP-dependent DNA helicase and an ATP-dependent, dual-direction single-stranded exonuclease. Recognizes the chi site generating a DNA molecule suitable for the initiation of homologous recombination. The AddA nuclease domain is required for chi fragment generation; this subunit has the helicase and 3' -&gt; 5' nuclease activities. The sequence is that of ATP-dependent helicase/nuclease subunit A from Bacillus cereus (strain AH820).